The primary structure comprises 258 residues: Adenylate kinase (258 aa).

ATP is bound at residue 52 to 57 (GAGKGT). The NMP stretch occupies residues 72–101 (ATGDMLRSQVAKKTALGKEAKKIMDQGGLV). AMP-binding positions include threonine 73, arginine 78, 99–101 (GLV), 128–131 (GFPR), and glutamine 135. An LID region spans residues 169–206 (GRLVHPASGRSYHKIFNPPKEEMKDDVTGEPLIQRSDD). Residues arginine 170 and 179-180 (SY) contribute to the ATP site. 2 residues coordinate AMP: arginine 203 and arginine 214. Glutamine 242 serves as a coordination point for ATP.

Belongs to the adenylate kinase family. AK2 subfamily. In terms of assembly, monomer.

It localises to the cytoplasm. The protein resides in the cytosol. The protein localises to the mitochondrion intermembrane space. It carries out the reaction AMP + ATP = 2 ADP. In terms of biological role, catalyzes the reversible transfer of the terminal phosphate group between ATP and AMP. Plays an important role in cellular energy homeostasis and in adenine nucleotide metabolism. Adenylate kinase activity is critical for regulation of the phosphate utilization and the AMP de novo biosynthesis pathways. In Aspergillus niger (strain ATCC MYA-4892 / CBS 513.88 / FGSC A1513), this protein is Adenylate kinase (adk1).